The primary structure comprises 419 residues: UDP-N-acetylglucosamine 1-carboxyvinyltransferase (419 aa).

Phosphoenolpyruvate is bound at residue 22–23 (KN). Arg91 contributes to the UDP-N-acetyl-alpha-D-glucosamine binding site. Catalysis depends on Cys115, which acts as the Proton donor. 2-(S-cysteinyl)pyruvic acid O-phosphothioketal is present on Cys115. Residues 120-124 (RPVDL), 160-163 (KVSV), Asp305, and Val327 each bind UDP-N-acetyl-alpha-D-glucosamine.

It belongs to the EPSP synthase family. MurA subfamily.

Its subcellular location is the cytoplasm. It catalyses the reaction phosphoenolpyruvate + UDP-N-acetyl-alpha-D-glucosamine = UDP-N-acetyl-3-O-(1-carboxyvinyl)-alpha-D-glucosamine + phosphate. Its pathway is cell wall biogenesis; peptidoglycan biosynthesis. Functionally, cell wall formation. Adds enolpyruvyl to UDP-N-acetylglucosamine. This Escherichia coli O157:H7 protein is UDP-N-acetylglucosamine 1-carboxyvinyltransferase.